The sequence spans 373 residues: Queuine tRNA-ribosyltransferase (373 aa).

Asp90 serves as the catalytic Proton acceptor. Residues 90 to 94 (DSGGF), Asp144, Gln193, and Gly220 contribute to the substrate site. The segment at 251–257 (GVGTPED) is RNA binding. Residue Asp270 is the Nucleophile of the active site. Positions 275–279 (TRNAR) are RNA binding; important for wobble base 34 recognition. Zn(2+)-binding residues include Cys308, Cys310, Cys313, and His339.

It belongs to the queuine tRNA-ribosyltransferase family. As to quaternary structure, homodimer. Within each dimer, one monomer is responsible for RNA recognition and catalysis, while the other monomer binds to the replacement base PreQ1. Zn(2+) is required as a cofactor.

The catalysed reaction is 7-aminomethyl-7-carbaguanine + guanosine(34) in tRNA = 7-aminomethyl-7-carbaguanosine(34) in tRNA + guanine. It participates in tRNA modification; tRNA-queuosine biosynthesis. Catalyzes the base-exchange of a guanine (G) residue with the queuine precursor 7-aminomethyl-7-deazaguanine (PreQ1) at position 34 (anticodon wobble position) in tRNAs with GU(N) anticodons (tRNA-Asp, -Asn, -His and -Tyr). Catalysis occurs through a double-displacement mechanism. The nucleophile active site attacks the C1' of nucleotide 34 to detach the guanine base from the RNA, forming a covalent enzyme-RNA intermediate. The proton acceptor active site deprotonates the incoming PreQ1, allowing a nucleophilic attack on the C1' of the ribose to form the product. After dissociation, two additional enzymatic reactions on the tRNA convert PreQ1 to queuine (Q), resulting in the hypermodified nucleoside queuosine (7-(((4,5-cis-dihydroxy-2-cyclopenten-1-yl)amino)methyl)-7-deazaguanosine). The chain is Queuine tRNA-ribosyltransferase from Campylobacter jejuni (strain RM1221).